Reading from the N-terminus, the 410-residue chain is Dipeptidase 1 (410 aa).

Positions 1–16 (MWTSWWLWPLVAVCTA) are cleaved as a signal peptide. Zn(2+)-binding residues include His36 and Asp38. Residue Asn57 is glycosylated (N-linked (GlcNAc...) asparagine). Residues Cys87 and Cys170 are joined by a disulfide bond. Glu141 lines the Zn(2+) pocket. His168 is a substrate binding site. Zn(2+) contacts are provided by His214 and His235. Cys242 and Cys274 are joined by a disulfide. Substrate is bound by residues Arg246 and Asp304. Ser384 is lipidated: GPI-anchor amidated serine. The propeptide at 385–410 (EAPSLHRRPGALLASLSLLLLSLGLL) is removed in mature form.

It belongs to the metallo-dependent hydrolases superfamily. Peptidase M19 family. Homodimer; disulfide-linked. The cofactor is Zn(2+).

The protein localises to the apical cell membrane. The protein resides in the cell projection. Its subcellular location is the microvillus membrane. It carries out the reaction an L-aminoacyl-L-amino acid + H2O = 2 an L-alpha-amino acid. The enzyme catalyses leukotriene D4 + H2O = leukotriene E4 + glycine. It catalyses the reaction L-cystine-bis-glycine + 2 H2O = L-cystine + 2 glycine. The catalysed reaction is a beta-lactam + H2O = a substituted beta-amino acid. It carries out the reaction glycyldehydrophenylalanine + H2O = 2,3-didehydrophenylalanine + glycine. Inhibited by L-penicillamine. Beta-lactamase activity is inhibited by cilastatin. Hydrolyzes a wide range of dipeptides including the conversion of leukotriene D4 to leukotriene E4. Hydrolyzes cystinyl-bis-glycine (cys-bis-gly) formed during glutathione degradation. Also possesses beta lactamase activity and hydrolytically inactivates beta-lactam antibiotics. Functionally, independently of its dipeptidase activity, acts as an adhesion receptor for neutrophil recruitment from bloodstream into inflamed lungs and liver. In Oryctolagus cuniculus (Rabbit), this protein is Dipeptidase 1 (DPEP1).